Reading from the N-terminus, the 316-residue chain is Taste receptor type 2 member 3 (316 aa).

Residues 1 to 7 (MLGFTEG) are Extracellular-facing. A helical membrane pass occupies residues 8 to 28 (IFLVLTVTEFILGNLVNGFIV). At 29 to 50 (SVNGSHWFKSKKISLSDFIITS) the chain is on the cytoplasmic side. A helical membrane pass occupies residues 51-71 (LALFRIFLLWIIFTDSLIIVF). Topologically, residues 72–86 (SYHTHDSGIRMQLID) are extracellular. The helical transmembrane segment at 87–107 (VFWTFTNHFSIWLISCLSVFY) threads the bilayer. Over 108–128 (CLKIATFSHPSFLWLKWRASR) the chain is Cytoplasmic. A helical transmembrane segment spans residues 129 to 149 (VVVGMLWGALVLSCVCTMSLM). The Extracellular portion of the chain corresponds to 150 to 186 (NEFKIYSALTGSRDTQNMTEYIRLKRHEYNLMHVLGN). The N-linked (GlcNAc...) asparagine glycan is linked to Asn-166. Residues 187 to 207 (LWKIPSLIVSLIAYFLLLLSL) form a helical membrane-spanning segment. Residues 208–234 (GKHTQQMQKYSVGSRDQSAEAHRRAMR) lie on the Cytoplasmic side of the membrane. A helical transmembrane segment spans residues 235-255 (IILSFLLFFLFYFLSFVILSS). The Extracellular portion of the chain corresponds to 256 to 266 (SRFLPETKIAR). Residues 267–287 (IIGVVITMSYLVGDSLILILG) form a helical membrane-spanning segment. The Cytoplasmic portion of the chain corresponds to 288–316 (NNKLKQTFVAILPCECGHPKPGSKRFFAS).

Belongs to the G-protein coupled receptor T2R family.

It localises to the membrane. In terms of biological role, gustducin-coupled receptor implicated in the perception of bitter compounds in the oral cavity and the gastrointestinal tract. Signals through PLCB2 and the calcium-regulated cation channel TRPM5. This is Taste receptor type 2 member 3 from Rattus norvegicus (Rat).